Consider the following 417-residue polypeptide: NADH-quinone oxidoreductase subunit D (417 aa).

Belongs to the complex I 49 kDa subunit family. As to quaternary structure, NDH-1 is composed of 14 different subunits. Subunits NuoB, C, D, E, F, and G constitute the peripheral sector of the complex.

The protein localises to the cell inner membrane. The catalysed reaction is a quinone + NADH + 5 H(+)(in) = a quinol + NAD(+) + 4 H(+)(out). Functionally, NDH-1 shuttles electrons from NADH, via FMN and iron-sulfur (Fe-S) centers, to quinones in the respiratory chain. The immediate electron acceptor for the enzyme in this species is believed to be ubiquinone. Couples the redox reaction to proton translocation (for every two electrons transferred, four hydrogen ions are translocated across the cytoplasmic membrane), and thus conserves the redox energy in a proton gradient. The chain is NADH-quinone oxidoreductase subunit D from Nitrosomonas eutropha (strain DSM 101675 / C91 / Nm57).